A 1254-amino-acid chain; its full sequence is AF4/FMR2 family member 3 (1254 aa).

The segment covering 45-62 (YEPDRNALRRKERERRSQ) has biased composition (basic and acidic residues). Disordered stretches follow at residues 45–90 (YEPD…GDEL), 139–190 (AESR…AAQQ), 261–324 (RPMD…GENN), 350–534 (EPSK…EGQD), and 552–752 (KTTC…SVGS). 2 stretches are compositionally biased toward polar residues: residues 67–76 (DSGSFNSGYS) and 143–158 (AQPQPSTVCSTASSTP). The span at 359–369 (KDSQLVSSGHS) shows a compositional bias: polar residues. The span at 406–418 (QQAAQRTALRALA) shows a compositional bias: low complexity. Residues 421 to 433 (SVVQQTNCRGSAP) show a composition bias toward polar residues. A compositionally biased stretch (low complexity) spans 441-472 (SSSSGGSSSSSDSESTSGSDSETESSSSSSES). Residues 552 to 561 (KTTCKEEQRP) are compositionally biased toward basic and acidic residues. The segment covering 577 to 605 (SPPAAVAVTAAALPPAVPSAPTESAPAPT) has biased composition (low complexity). Residues 615-633 (RRTERTSAGDGANCHRPEE) are compositionally biased toward basic and acidic residues. Low complexity-rich tracts occupy residues 694–704 (TESSSSSSSSD) and 732–749 (AASSNNNSNSNSSTSRAS). Position 782 is a phosphoserine (S782). The interval 813-883 (PGVLSAPSAK…ASTNNTLSGN (71 aa)) is disordered. A compositionally biased stretch (basic and acidic residues) spans 857–869 (REIKKVQGRKESA). Residues 873 to 883 (AASTNNTLSGN) are compositionally biased toward polar residues. S908 bears the Phosphoserine mark. Disordered stretches follow at residues 919–991 (ASED…HRDC) and 1128–1171 (AAQA…SGLS). 2 stretches are compositionally biased toward polar residues: residues 922 to 941 (DLTSSSRPHGNGLLTSASSN) and 960 to 985 (ASHNSSENGTLHSKSRPQTEPWSPGS). 2 stretches are compositionally biased toward low complexity: residues 1132 to 1146 (PSPWGSSGKSTGSPS) and 1154 to 1171 (PASSVGSQGSLSSSSGLS).

Belongs to the AF4 family. In terms of tissue distribution, highest levels found in lymphoid tissues, lower levels in brain and lung.

The protein resides in the nucleus. Its function is as follows. Putative transcription activator that may function in lymphoid development and oncogenesis. This chain is AF4/FMR2 family member 3 (Aff3), found in Mus musculus (Mouse).